The primary structure comprises 545 residues: Protein FAR1-RELATED SEQUENCE 9 (545 aa).

One can recognise an FAR1 domain in the interval 22–65; sequence LNYLKRRQLENPGFLYAIEDDCGNVFWADPTCRLNYTYFGDTLV. The MULE domain occupies 66-150; it reads FDTTYRRGKR…RVFSQTRLRF (85 aa). Residues 345–381 form an SWIM-type zinc finger; sequence HTVSFDSLEVKANCSCQMFEYSGIICRHILAVFSAKN. A disordered region spans residues 460–495; sequence SNRTPGTRLPNGEAYPSEEARETANATNHPGGEKER. A coiled-coil region spans residues 492-545; that stretch reads EKERTILELTAELERTGQRCEVYRANLLSILRDMEEQKFQLSLKVQNARLSLKE.

Belongs to the FHY3/FAR1 family. In terms of tissue distribution, expressed in hypocotyls, rosette and cauline leaves, inflorescences stems, flowers and siliques.

It is found in the nucleus. Putative transcription activator involved in regulating light control of development. May act as a negative regulator specific to phyB signaling. The sequence is that of Protein FAR1-RELATED SEQUENCE 9 (FRS9) from Arabidopsis thaliana (Mouse-ear cress).